A 129-amino-acid chain; its full sequence is Flagellar assembly factor FliW 2 (129 aa).

This sequence belongs to the FliW family. Interacts with translational regulator CsrA and flagellin(s).

Its subcellular location is the cytoplasm. Its function is as follows. Acts as an anti-CsrA protein, binds CsrA and prevents it from repressing translation of its target genes, one of which is flagellin. Binds to flagellin and participates in the assembly of the flagellum. The chain is Flagellar assembly factor FliW 2 from Helicobacter pylori (strain J99 / ATCC 700824) (Campylobacter pylori J99).